Here is a 153-residue protein sequence, read N- to C-terminus: Aspartate carbamoyltransferase regulatory chain (153 aa).

Cysteine 109, cysteine 114, cysteine 135, and cysteine 138 together coordinate Zn(2+).

Belongs to the PyrI family. Contains catalytic and regulatory chains. The cofactor is Zn(2+).

In terms of biological role, involved in allosteric regulation of aspartate carbamoyltransferase. The protein is Aspartate carbamoyltransferase regulatory chain of Natronomonas pharaonis (strain ATCC 35678 / DSM 2160 / CIP 103997 / JCM 8858 / NBRC 14720 / NCIMB 2260 / Gabara) (Halobacterium pharaonis).